The following is a 133-amino-acid chain: MSTMNFLLSTILPGMYNDADAGTSSFCPSFPAWETVLISSIHSVNLPLAMVNACKDCVKCCNSWSNCCFTAFSCSGFSLVKSTKFRTCSNLKVSKVSVRWQQRRSYSFTYFFERTWLDFYSALSCLGHSKIFI.

This is an uncharacterized protein from Saccharomyces cerevisiae (strain ATCC 204508 / S288c) (Baker's yeast).